A 187-amino-acid polypeptide reads, in one-letter code: dCTP deaminase (187 aa).

DCTP-binding positions include 110–115, 134–136, Gln-155, Tyr-169, and Gln-179; these read KSTYAR and TLE. Residue Glu-136 is the Proton donor/acceptor of the active site.

Belongs to the dCTP deaminase family. In terms of assembly, homotrimer.

The catalysed reaction is dCTP + H2O + H(+) = dUTP + NH4(+). It functions in the pathway pyrimidine metabolism; dUMP biosynthesis; dUMP from dCTP (dUTP route): step 1/2. Its function is as follows. Catalyzes the deamination of dCTP to dUTP. The protein is dCTP deaminase of Bordetella petrii (strain ATCC BAA-461 / DSM 12804 / CCUG 43448).